A 165-amino-acid chain; its full sequence is Nicotine 6-hydroxylase small subunit (165 aa).

Residues 10 to 86 (VEIDVEVNGR…GRSIRTVEDL (77 aa)) form the 2Fe-2S ferredoxin-type domain. [2Fe-2S] cluster-binding residues include Cys-48, Cys-53, Cys-56, and Cys-68.

As to quaternary structure, heterotrimer composed of a large subunit (NdhL), a medium subunit (NdhM) and a small subunit (NdhS). Requires [2Fe-2S] cluster as cofactor.

It localises to the cytoplasm. The catalysed reaction is (R)-nicotine + A + H2O = (R)-6-hydroxynicotine + AH2. The enzyme catalyses (S)-nicotine + A + H2O = (S)-6-hydroxynicotine + AH2. It participates in alkaloid degradation; nicotine degradation; 6-hydroxypseudooxynicotine from nicotine (R-isomer route): step 1/2. The protein operates within alkaloid degradation; nicotine degradation; 6-hydroxypseudooxynicotine from nicotine (S-isomer route): step 1/2. Its activity is regulated as follows. Nicotine dehydrogenase activity is inhibited by tungsten. Component of the nicotine 6-hydroxylase, which is involved in the degradation of nicotine. Catalyzes the hydroxylation of the pyridine ring at C6 to form 6-hydroxynicotine. Can use both L-nicotine and D-nicotine. The polypeptide is Nicotine 6-hydroxylase small subunit (Paenarthrobacter nicotinovorans (Arthrobacter nicotinovorans)).